Reading from the N-terminus, the 226-residue chain is UPF0111 protein HI_1603 (226 aa).

Belongs to the UPF0111 family.

The sequence is that of UPF0111 protein HI_1603 from Haemophilus influenzae (strain ATCC 51907 / DSM 11121 / KW20 / Rd).